Here is a 90-residue protein sequence, read N- to C-terminus: Actobindin-B/C (90 aa).

WH2 domains are found at residues 4-21 (TANP…LKHA) and 40-57 (DHSS…LKHV). The disordered stretch occupies residues 57–90 (VETQDRSAPVTEGATVKSNNHSALLGEIKSKAQE).

In terms of assembly, monomer.

Functionally, is able to bind two actin monomers at high concentrations of G-actin. Inhibits actin polymerization by sequestering G-actin and stabilizing actin dimers. In Dictyostelium discoideum (Social amoeba), this protein is Actobindin-B/C (abnB).